Reading from the N-terminus, the 366-residue chain is S-adenosylmethionine:tRNA ribosyltransferase-isomerase (366 aa).

It belongs to the QueA family. As to quaternary structure, monomer.

It is found in the cytoplasm. It carries out the reaction 7-aminomethyl-7-carbaguanosine(34) in tRNA + S-adenosyl-L-methionine = epoxyqueuosine(34) in tRNA + adenine + L-methionine + 2 H(+). It participates in tRNA modification; tRNA-queuosine biosynthesis. In terms of biological role, transfers and isomerizes the ribose moiety from AdoMet to the 7-aminomethyl group of 7-deazaguanine (preQ1-tRNA) to give epoxyqueuosine (oQ-tRNA). The sequence is that of S-adenosylmethionine:tRNA ribosyltransferase-isomerase from Parasynechococcus marenigrum (strain WH8102).